The sequence spans 89 residues: Putative regulatory protein PCC8801_0196 (89 aa).

Belongs to the RemA family.

The polypeptide is Putative regulatory protein PCC8801_0196 (Rippkaea orientalis (strain PCC 8801 / RF-1) (Cyanothece sp. (strain PCC 8801))).